A 344-amino-acid chain; its full sequence is Anthranilate phosphoribosyltransferase (344 aa).

5-phospho-alpha-D-ribose 1-diphosphate is bound by residues G86, 89-90 (GD), T94, 96-99 (NIST), 114-122 (KHGNKSASG), and S126. An anthranilate-binding site is contributed by G86. Position 98 (S98) interacts with Mg(2+). Anthranilate is bound at residue N117. R172 is an anthranilate binding site. Mg(2+)-binding residues include D231 and E232.

It belongs to the anthranilate phosphoribosyltransferase family. In terms of assembly, homodimer. Requires Mg(2+) as cofactor.

The catalysed reaction is N-(5-phospho-beta-D-ribosyl)anthranilate + diphosphate = 5-phospho-alpha-D-ribose 1-diphosphate + anthranilate. It functions in the pathway amino-acid biosynthesis; L-tryptophan biosynthesis; L-tryptophan from chorismate: step 2/5. Functionally, catalyzes the transfer of the phosphoribosyl group of 5-phosphorylribose-1-pyrophosphate (PRPP) to anthranilate to yield N-(5'-phosphoribosyl)-anthranilate (PRA). This chain is Anthranilate phosphoribosyltransferase, found in Prochlorococcus marinus (strain AS9601).